We begin with the raw amino-acid sequence, 212 residues long: MIDPPMDRIKVSGLYAITPDIENIDRLCEMAYHVLAGGVSWLQYRNKKANSRLRLMQALEIHLLCKQFQVPLIINDHMDLVMEIDAEGLHVGGEDTSVAAARHYLGRNKIIGVSCYNQLSHAIEAEKAGADYVAFGAFYPSMTKVDAYQAPIHLLDAAKKTLNIPIVAIGGINLDNAEALIARGCDAVAVSQALFSAQDIQSAARHFSKLFC.

4-amino-2-methyl-5-(diphosphooxymethyl)pyrimidine-binding positions include 43-47 and asparagine 75; that span reads QYRNK. The Mg(2+) site is built by aspartate 76 and aspartate 95. Serine 114 is a binding site for 4-amino-2-methyl-5-(diphosphooxymethyl)pyrimidine. 141–143 is a binding site for 2-[(2R,5Z)-2-carboxy-4-methylthiazol-5(2H)-ylidene]ethyl phosphate; the sequence is SMT. Position 144 (lysine 144) interacts with 4-amino-2-methyl-5-(diphosphooxymethyl)pyrimidine. Glycine 171 contributes to the 2-[(2R,5Z)-2-carboxy-4-methylthiazol-5(2H)-ylidene]ethyl phosphate binding site.

The protein belongs to the thiamine-phosphate synthase family. Mg(2+) serves as cofactor.

It carries out the reaction 2-[(2R,5Z)-2-carboxy-4-methylthiazol-5(2H)-ylidene]ethyl phosphate + 4-amino-2-methyl-5-(diphosphooxymethyl)pyrimidine + 2 H(+) = thiamine phosphate + CO2 + diphosphate. It catalyses the reaction 2-(2-carboxy-4-methylthiazol-5-yl)ethyl phosphate + 4-amino-2-methyl-5-(diphosphooxymethyl)pyrimidine + 2 H(+) = thiamine phosphate + CO2 + diphosphate. The enzyme catalyses 4-methyl-5-(2-phosphooxyethyl)-thiazole + 4-amino-2-methyl-5-(diphosphooxymethyl)pyrimidine + H(+) = thiamine phosphate + diphosphate. Its pathway is cofactor biosynthesis; thiamine diphosphate biosynthesis; thiamine phosphate from 4-amino-2-methyl-5-diphosphomethylpyrimidine and 4-methyl-5-(2-phosphoethyl)-thiazole: step 1/1. Its function is as follows. Condenses 4-methyl-5-(beta-hydroxyethyl)thiazole monophosphate (THZ-P) and 2-methyl-4-amino-5-hydroxymethyl pyrimidine pyrophosphate (HMP-PP) to form thiamine monophosphate (TMP). The chain is Thiamine-phosphate synthase from Nitrosomonas eutropha (strain DSM 101675 / C91 / Nm57).